A 317-amino-acid polypeptide reads, in one-letter code: Glycine--tRNA ligase alpha subunit (317 aa).

Belongs to the class-II aminoacyl-tRNA synthetase family. Tetramer of two alpha and two beta subunits.

It localises to the cytoplasm. The catalysed reaction is tRNA(Gly) + glycine + ATP = glycyl-tRNA(Gly) + AMP + diphosphate. The protein is Glycine--tRNA ligase alpha subunit of Acidovorax ebreus (strain TPSY) (Diaphorobacter sp. (strain TPSY)).